A 174-amino-acid polypeptide reads, in one-letter code: uncharacterized protein (174 aa).

Belongs to the IIV-6 196R family.

This is an uncharacterized protein from Acheta domesticus (House cricket).